We begin with the raw amino-acid sequence, 437 residues long: CCA-adding enzyme (437 aa).

ATP is bound by residues Ser47 and Arg50. CTP contacts are provided by Ser47 and Arg50. Residues Glu59, Asp61, and Asp110 each coordinate Mg(2+). ATP-binding residues include His133, Lys152, and Tyr161. The CTP site is built by His133, Lys152, and Tyr161.

Belongs to the tRNA nucleotidyltransferase/poly(A) polymerase family. Archaeal CCA-adding enzyme subfamily. As to quaternary structure, homodimer. It depends on Mg(2+) as a cofactor.

It carries out the reaction a tRNA precursor + 2 CTP + ATP = a tRNA with a 3' CCA end + 3 diphosphate. It catalyses the reaction a tRNA with a 3' CCA end + 2 CTP + ATP = a tRNA with a 3' CCACCA end + 3 diphosphate. Functionally, catalyzes the addition and repair of the essential 3'-terminal CCA sequence in tRNAs without using a nucleic acid template. Adds these three nucleotides in the order of C, C, and A to the tRNA nucleotide-73, using CTP and ATP as substrates and producing inorganic pyrophosphate. tRNA 3'-terminal CCA addition is required both for tRNA processing and repair. Also involved in tRNA surveillance by mediating tandem CCA addition to generate a CCACCA at the 3' terminus of unstable tRNAs. While stable tRNAs receive only 3'-terminal CCA, unstable tRNAs are marked with CCACCA and rapidly degraded. The structural flexibility of RNA controls the choice between CCA versus CCACCA addition: following the first CCA addition cycle, nucleotide-binding to the active site triggers a clockwise screw motion, producing torque on the RNA. This ejects stable RNAs, whereas unstable RNAs are refolded while bound to the enzyme and subjected to a second CCA catalytic cycle. The polypeptide is CCA-adding enzyme (Archaeoglobus fulgidus (strain ATCC 49558 / DSM 4304 / JCM 9628 / NBRC 100126 / VC-16)).